Consider the following 58-residue polypeptide: Small ribosomal subunit protein bS21 (58 aa).

It belongs to the bacterial ribosomal protein bS21 family.

In Picosynechococcus sp. (strain ATCC 27264 / PCC 7002 / PR-6) (Agmenellum quadruplicatum), this protein is Small ribosomal subunit protein bS21.